A 478-amino-acid chain; its full sequence is Proline--tRNA ligase (478 aa).

It belongs to the class-II aminoacyl-tRNA synthetase family. ProS type 3 subfamily. As to quaternary structure, homodimer.

The protein resides in the cytoplasm. It carries out the reaction tRNA(Pro) + L-proline + ATP = L-prolyl-tRNA(Pro) + AMP + diphosphate. Its function is as follows. Catalyzes the attachment of proline to tRNA(Pro) in a two-step reaction: proline is first activated by ATP to form Pro-AMP and then transferred to the acceptor end of tRNA(Pro). The polypeptide is Proline--tRNA ligase (Clostridium novyi (strain NT)).